We begin with the raw amino-acid sequence, 104 residues long: Pterin-4-alpha-carbinolamine dehydratase (104 aa).

Ala-2 carries the post-translational modification N-acetylalanine. Substrate contacts are provided by residues 61–63 (DHH) and 78–81 (STHE).

The protein belongs to the pterin-4-alpha-carbinolamine dehydratase family. As to quaternary structure, homotetramer and homodimer. Heterotetramer with HNF1A; formed by a dimer of dimers. Interacts with HNF1B (via HNF-p1 domain); the interaction increases HNF1B transactivation activity.

The protein localises to the cytoplasm. The protein resides in the nucleus. It catalyses the reaction (4aS,6R)-4a-hydroxy-L-erythro-5,6,7,8-tetrahydrobiopterin = (6R)-L-erythro-6,7-dihydrobiopterin + H2O. In terms of biological role, involved in tetrahydrobiopterin biosynthesis. Seems to both prevent the formation of 7-pterins and accelerate the formation of quinonoid-BH2. Coactivator for HNF1A-dependent transcription. Regulates the dimerization of homeodomain protein HNF1A and enhances its transcriptional activity. Also acts as a coactivator for HNF1B-dependent transcription. The protein is Pterin-4-alpha-carbinolamine dehydratase (Pcbd1) of Rattus norvegicus (Rat).